We begin with the raw amino-acid sequence, 387 residues long: O-methyltransferase fsr2 (387 aa).

Asp231 provides a ligand contact to S-adenosyl-L-methionine. The Proton acceptor role is filled by His280.

Belongs to the class I-like SAM-binding methyltransferase superfamily. Cation-independent O-methyltransferase family. COMT subfamily.

It functions in the pathway polyketide biosynthesis. Its function is as follows. O-methyltransferase; part of the gene cluster that mediates the biosynthesis of fusarubins, highly pigmented naphthoquinones responsible for the coloration of the fruiting bodies. The non-reducing polyketide synthase FSR1 is responsible for the condensation of seven acetyl-CoA units to yield a haptaketide. After rings A and B are formed by aldol-type cyclization, the PKS-derived product is released as 6-O-demethylfusarubinaldehyde. Then, two hydroxyl groups at C-5 and C-10 are incorporated by FSR3, and simultaneously hydroxyl groups at C-6 and C-8 are methylated by FSR2. The aldehyde is, on the one hand, reduced by FSR3 to 8-O-methylfusarubin alcohol, which equilibrates mainly with 8-O-methylfusarubin and only small amounts of 8-O-methylnectriafurone. On the other hand, the aldehyde can be oxidized to form 8-O-methylfusarubinic acid, a reaction driven by FSR3 equilibrating with 8-O-methylfusarubinlactone, finally resulting in 8-O-methylanhydrofusarubinlactol after a further reduction step and loss of water. 8-O-Methylfusarubinic acid can also undergo decarboxylation, resulting in 8-O-methyl-13-hydroxynorjavanicin after another hydroxylation step at C-13. Both steps are most likely also accomplished by FSR3. No enzymatic function has been determined so far for either FSR4 and FSR5. Their deletion does not alter the product spectrum, but the possibility that they catalyze specific enzymatic steps during perithecium development cannot be ruled out. FSR4 might possess a regulatory function in the biosynthesis of fusarubins. In Gibberella fujikuroi (strain CBS 195.34 / IMI 58289 / NRRL A-6831) (Bakanae and foot rot disease fungus), this protein is O-methyltransferase fsr2.